Here is a 351-residue protein sequence, read N- to C-terminus: Nuclear inhibitor of protein phosphatase 1 (351 aa).

Residues 1 to 142 form an interaction with CDC5L, SF3B1 and MELK region; it reads MAAAANSGSS…LPSAVKGDEK (142 aa). Positions 49–101 constitute an FHA domain; the sequence is YLFGRNPDLCDFTIDHQSCSRVHAALVYHKHLKRVFLIDLNSTHGTFLGHIRL. Positions 143–224 are interaction with EED; the sequence is MGGEDDELKG…VDPSVGRFRN (82 aa). Thr161 bears the Phosphothreonine; by CK2; in vitro mark. Ser178 is subject to Phosphoserine; by PKA; in vitro. 2 short sequence motifs (nuclear localization signal) span residues 185–209 and 210–240; these read GNLD…DDEI and INPE…RVEG. The interval 191–200 is involved in PP-1 inhibition; it reads RPKRKRKNSR. Ser199 is subject to Phosphoserine. An involved in PP-1 binding region spans residues 200-203; that stretch reads RVTF. Position 204 is a phosphoserine (Ser204). At Ser249 the chain carries Phosphoserine. Tyr264 is modified (phosphotyrosine). The interaction with EED stretch occupies residues 310-329; that stretch reads AVNMNPAPNPAVYNPEAVNE. A disordered region spans residues 316 to 351; the sequence is APNPAVYNPEAVNEPKKKKYAKEAWPGKKPTPSLLI. Residues 330-351 are RNA-binding; that stretch reads PKKKKYAKEAWPGKKPTPSLLI. The segment at 331 to 337 is involved in PP-1 inhibition; that stretch reads KKKKYAK. Phosphotyrosine is present on Tyr335.

As to quaternary structure, interacts with phosphorylated CDC5L, SF3B1 and MELK. Interacts with EED. Part of a complex consisting of PPP1R8, EED, HDAC2 and PP-1. Part of the spliceosome. Interacts with PPP1CA, PPP1CB and PPP1CC. The N-terminus is blocked. In terms of processing, inactivated by phosphorylation on Ser-199 or Ser-204.

The protein localises to the nucleus. The protein resides in the nucleus speckle. Its function is as follows. Inhibitor subunit of the major nuclear protein phosphatase-1 (PP-1). It has RNA-binding activity but does not cleave RNA and may target PP-1 to RNA-associated substrates. May also be involved in pre-mRNA splicing. Binds DNA and might act as a transcriptional repressor. Seems to be required for cell proliferation. This chain is Nuclear inhibitor of protein phosphatase 1 (PPP1R8), found in Bos taurus (Bovine).